Consider the following 147-residue polypeptide: Lysozyme C-1 (147 aa).

The N-terminal stretch at 1-18 (MKALIILGFLFLSVAVQG) is a signal peptide. A C-type lysozyme domain is found at 19 to 147 (KVFERCELAR…VSSYVEGCTL (129 aa)). Cystine bridges form between C24/C145, C48/C133, C83/C99, and C95/C113. Active-site residues include E53 and D71.

Belongs to the glycosyl hydrolase 22 family. Monomer. In terms of tissue distribution, stomach-specific.

It carries out the reaction Hydrolysis of (1-&gt;4)-beta-linkages between N-acetylmuramic acid and N-acetyl-D-glucosamine residues in a peptidoglycan and between N-acetyl-D-glucosamine residues in chitodextrins.. In terms of biological role, lysozymes have primarily a bacteriolytic function; those in tissues and body fluids are associated with the monocyte-macrophage system and enhance the activity of immunoagents. This chain is Lysozyme C-1 (LYZ1), found in Bos taurus (Bovine).